A 142-amino-acid chain; its full sequence is Large ribosomal subunit protein uL11 (142 aa).

This sequence belongs to the universal ribosomal protein uL11 family. Part of the ribosomal stalk of the 50S ribosomal subunit. Interacts with L10 and the large rRNA to form the base of the stalk. L10 forms an elongated spine to which L12 dimers bind in a sequential fashion forming a multimeric L10(L12)X complex. Post-translationally, one or more lysine residues are methylated.

In terms of biological role, forms part of the ribosomal stalk which helps the ribosome interact with GTP-bound translation factors. This Leptospira borgpetersenii serovar Hardjo-bovis (strain JB197) protein is Large ribosomal subunit protein uL11.